A 394-amino-acid chain; its full sequence is Choline/ethanolamine kinase (394 aa).

A2 carries the N-acetylalanine modification. The tract at residues 22 to 42 is disordered; the sequence is GLLDAKCPEPIPNRRRSSSLS. Residues 75–81, R104, 146–152, Q244, and D264 each bind ATP; these read SGGLSNL and QYLPSRP. Residue 77–79 coordinates substrate; that stretch reads GLS.

The protein belongs to the choline/ethanolamine kinase family. As to quaternary structure, homodimer, and heterodimer with CHKA.

The enzyme catalyses choline + ATP = phosphocholine + ADP + H(+). It carries out the reaction ethanolamine + ATP = phosphoethanolamine + ADP + H(+). It functions in the pathway phospholipid metabolism; phosphatidylethanolamine biosynthesis; phosphatidylethanolamine from ethanolamine: step 1/3. Functionally, has a key role in phospholipid metabolism, and catalyzes the first step of phosphatidylethanolamine and phosphatidylcholine biosynthesis. The chain is Choline/ethanolamine kinase (Chkb) from Rattus norvegicus (Rat).